We begin with the raw amino-acid sequence, 220 residues long: Histone deacetylase complex subunit SAP30 (220 aa).

The segment at 1–129 is interaction with NCOR1; the sequence is MNGFTPEEMS…QSVRNRRKRK (129 aa). Phosphothreonine is present on Thr5. The segment at 67–115 adopts an Atypical zinc-finger fold; the sequence is CCLREDGERCGRAAGNASFSKRIQKSISQKKVKIELDKSARHLYICDYH. Lys87 is covalently cross-linked (Glycyl lysine isopeptide (Lys-Gly) (interchain with G-Cter in SUMO2)). Residues 123-143 form a disordered region; sequence RNRRKRKGSDDDGGDSPVQDI. Residues 130-220 are interaction with SIN3A; that stretch reads GSDDDGGDSP…SDLKADSGVH (91 aa). Ser131 and Ser138 each carry phosphoserine. Thr145 is subject to Phosphothreonine. Residues Lys194 and Lys214 each participate in a glycyl lysine isopeptide (Lys-Gly) (interchain with G-Cter in SUMO2) cross-link.

This sequence belongs to the SAP30 family. As to quaternary structure, component of the histone deacetylase complex that includes at least SIN3A, HDAC1 and HDAC2. Found in a complex composed of at least SINHCAF, SIN3A, HDAC1, SAP30, RBBP4, OGT and TET1. Interacts with HDAC1. Interacts with SIN3A, SIN3B, HDAC2, RBBP4 and NCOR1. Interacts directly with SAMSN1. Interacts with HCFC1. Interacts with SAP30BP.

It localises to the nucleus. Functionally, involved in the functional recruitment of the Sin3-histone deacetylase complex (HDAC) to a specific subset of N-CoR corepressor complexes. Capable of transcription repression by N-CoR. Active in deacetylating core histone octamers (when in a complex) but inactive in deacetylating nucleosomal histones. The sequence is that of Histone deacetylase complex subunit SAP30 from Mus musculus (Mouse).